The sequence spans 72 residues: MAKDDVIVVDGKVIEALPNAMFRVELDNGHVVLCHISGKMRMHYIKILPNDTVKVEITPYSLDKGRITHRYK.

The S1-like domain maps to Met-1–Lys-72.

This sequence belongs to the IF-1 family. As to quaternary structure, component of the 30S ribosomal translation pre-initiation complex which assembles on the 30S ribosome in the order IF-2 and IF-3, IF-1 and N-formylmethionyl-tRNA(fMet); mRNA recruitment can occur at any time during PIC assembly.

Its subcellular location is the cytoplasm. In terms of biological role, one of the essential components for the initiation of protein synthesis. Stabilizes the binding of IF-2 and IF-3 on the 30S subunit to which N-formylmethionyl-tRNA(fMet) subsequently binds. Helps modulate mRNA selection, yielding the 30S pre-initiation complex (PIC). Upon addition of the 50S ribosomal subunit IF-1, IF-2 and IF-3 are released leaving the mature 70S translation initiation complex. The polypeptide is Translation initiation factor IF-1 (Aliarcobacter butzleri (strain RM4018) (Arcobacter butzleri)).